The sequence spans 429 residues: C4-dicarboxylate transport protein (429 aa).

A run of 8 helical transmembrane segments spans residues Val-9–Pro-29, Leu-45–Met-65, Leu-79–Ile-99, Gly-149–Gly-169, Val-185–Met-205, Leu-223–Ala-243, Ile-308–Met-328, and Ala-356–Ile-376.

The protein belongs to the dicarboxylate/amino acid:cation symporter (DAACS) (TC 2.A.23) family.

The protein localises to the cell inner membrane. Functionally, responsible for the transport of dicarboxylates such as succinate, fumarate, and malate from the periplasm across the membrane. This chain is C4-dicarboxylate transport protein, found in Burkholderia lata (strain ATCC 17760 / DSM 23089 / LMG 22485 / NCIMB 9086 / R18194 / 383).